We begin with the raw amino-acid sequence, 481 residues long: Proline--tRNA ligase (481 aa).

The protein belongs to the class-II aminoacyl-tRNA synthetase family. ProS type 3 subfamily. In terms of assembly, homodimer.

Its subcellular location is the cytoplasm. It carries out the reaction tRNA(Pro) + L-proline + ATP = L-prolyl-tRNA(Pro) + AMP + diphosphate. Its function is as follows. Catalyzes the attachment of proline to tRNA(Pro) in a two-step reaction: proline is first activated by ATP to form Pro-AMP and then transferred to the acceptor end of tRNA(Pro). The polypeptide is Proline--tRNA ligase (Thermococcus kodakarensis (strain ATCC BAA-918 / JCM 12380 / KOD1) (Pyrococcus kodakaraensis (strain KOD1))).